A 319-amino-acid chain; its full sequence is Zinc finger protein-like 1 homolog (319 aa).

The B box-type; degenerate zinc finger occupies M1–W43. The RING-type; atypical zinc-finger motif lies at C53–S101. The disordered stretch occupies residues E212–N232. The span at P219 to N232 shows a compositional bias: basic and acidic residues. The helical transmembrane segment at K264–L284 threads the bilayer.

It belongs to the ZFPL1 family.

The protein localises to the membrane. The polypeptide is Zinc finger protein-like 1 homolog (Caenorhabditis briggsae).